Consider the following 184-residue polypeptide: ATP-dependent 6-phosphofructokinase (184 aa).

Residues 1–184 (GGDGSLTGAN…TRTTVLGHIQ (184 aa)) form an N-terminal catalytic PFK domain 1 region. Position 2–5 (2–5 (GDGS)) interacts with ATP. A Mg(2+)-binding site is contributed by aspartate 3. Residues 48 to 50 (SID), arginine 85, 92 to 94 (MGR), glutamate 148, arginine 176, and 182 to 184 (HIQ) contribute to the substrate site. Catalysis depends on aspartate 50, which acts as the Proton acceptor.

Belongs to the phosphofructokinase type A (PFKA) family. ATP-dependent PFK group I subfamily. Eukaryotic two domain clade 'E' sub-subfamily. As to quaternary structure, homotetramer. Mg(2+) is required as a cofactor.

Its subcellular location is the cytoplasm. The catalysed reaction is beta-D-fructose 6-phosphate + ATP = beta-D-fructose 1,6-bisphosphate + ADP + H(+). Its pathway is carbohydrate degradation; glycolysis; D-glyceraldehyde 3-phosphate and glycerone phosphate from D-glucose: step 3/4. Allosterically activated by ADP, AMP, or fructose 2,6-bisphosphate, and allosterically inhibited by ATP or citrate. Its function is as follows. Catalyzes the phosphorylation of D-fructose 6-phosphate to fructose 1,6-bisphosphate by ATP, the first committing step of glycolysis. In Calanus finmarchicus (Calanus tonsus), this protein is ATP-dependent 6-phosphofructokinase (PFK).